The sequence spans 73 residues: Metallothionein (73 aa).

16 residues coordinate Cd(2+): Cys-15, Cys-20, Cys-26, Cys-28, Cys-32, Cys-34, Cys-39, Cys-46, Cys-48, Cys-52, Cys-54, Cys-58, Cys-64, Cys-66, Cys-70, and Cys-72.

The protein belongs to the metallothionein superfamily. Type 2 family.

In terms of biological role, the metallothioneins are involved in the cellular sequestration of toxic metal ions. This is Metallothionein from Dreissena polymorpha (Zebra mussel).